We begin with the raw amino-acid sequence, 357 residues long: DNA replication and repair protein RecF (357 aa).

Residue 31-38 (GQNGAGKT) coordinates ATP.

Belongs to the RecF family.

The protein resides in the cytoplasm. In terms of biological role, the RecF protein is involved in DNA metabolism; it is required for DNA replication and normal SOS inducibility. RecF binds preferentially to single-stranded, linear DNA. It also seems to bind ATP. This Coxiella burnetii (strain CbuG_Q212) (Coxiella burnetii (strain Q212)) protein is DNA replication and repair protein RecF.